A 598-amino-acid polypeptide reads, in one-letter code: Peptidoglycan D,D-transpeptidase FtsI homolog (598 aa).

The helical transmembrane segment at 12–33 (IVLVWILFFSGSSLLLGRLFYL) threads the bilayer. The active-site Acyl-ester intermediate is the serine 291.

It belongs to the transpeptidase family.

It localises to the plastid. It is found in the chloroplast membrane. The catalysed reaction is Preferential cleavage: (Ac)2-L-Lys-D-Ala-|-D-Ala. Also transpeptidation of peptidyl-alanyl moieties that are N-acyl substituents of D-alanine.. In Mesostigma viride (Green alga), this protein is Peptidoglycan D,D-transpeptidase FtsI homolog (ftsI).